A 345-amino-acid chain; its full sequence is Fe-S cluster assembly protein DRE2 (345 aa).

Residues 11–166 (FSHSSNGVVL…SIGSSSGSSS (156 aa)) are N-terminal SAM-like domain. The tract at residues 147-166 (SKPATASSSFSIGSSSGSSS) is disordered. A compositionally biased stretch (low complexity) spans 153 to 166 (SSSFSIGSSSGSSS). The segment at 167–210 (ALPLRRKLGSGASANAKKSLWATQPASANDLIDEASLLRDADFV) is linker. [2Fe-2S] cluster is bound by residues Cys-220, Cys-233, Cys-236, and Cys-238. The segment at 220 to 238 (CDVGAGQGKKKKACKGCTC) is fe-S binding site A. Cys-307, Cys-310, Cys-318, and Cys-321 together coordinate [4Fe-4S] cluster. Short sequence motifs (cx2C motif) lie at residues 307–310 (CGSC) and 318–321 (CSSC). Residues 307-321 (CGSCFLGDAFRCSSC) form a fe-S binding site B region.

It belongs to the anamorsin family. Monomer. Interacts with TAH18. Interacts with MIA40. [2Fe-2S] cluster serves as cofactor. Requires [4Fe-4S] cluster as cofactor.

The protein localises to the cytoplasm. Its subcellular location is the mitochondrion intermembrane space. Functionally, component of the cytosolic iron-sulfur (Fe-S) protein assembly (CIA) machinery required for the maturation of extramitochondrial Fe-S proteins. Part of an electron transfer chain functioning in an early step of cytosolic Fe-S biogenesis, facilitating the de novo assembly of a [4Fe-4S] cluster on the scaffold complex CFD1-NBP35. Electrons are transferred to DRE2 from NADPH via the FAD- and FMN-containing protein TAH18. TAH18-DRE2 are also required for the assembly of the diferric tyrosyl radical cofactor of ribonucleotide reductase (RNR), probably by providing electrons for reduction during radical cofactor maturation in the catalytic small subunit RNR2. The protein is Fe-S cluster assembly protein DRE2 of Mycosarcoma maydis (Corn smut fungus).